The primary structure comprises 150 residues: Interferon antagonist OPG027 (150 aa).

It belongs to the orthopoxvirus OPG027 family.

Inhibits antiviral activity induced by type I interferons. Does not block signal transduction of IFN, but is important to counteract the host antiviral state induced by a pre-treatment with IFN. This chain is Interferon antagonist OPG027 (OPG027), found in Vaccinia virus (strain Ankara) (VACV).